The following is a 180-amino-acid chain: Crossover junction endodeoxyribonuclease RuvC (180 aa).

Catalysis depends on residues D7, E66, and D138. Positions 7, 66, and 138 each coordinate Mg(2+).

Belongs to the RuvC family. In terms of assembly, homodimer which binds Holliday junction (HJ) DNA. The HJ becomes 2-fold symmetrical on binding to RuvC with unstacked arms; it has a different conformation from HJ DNA in complex with RuvA. In the full resolvosome a probable DNA-RuvA(4)-RuvB(12)-RuvC(2) complex forms which resolves the HJ. Mg(2+) serves as cofactor.

It is found in the cytoplasm. It carries out the reaction Endonucleolytic cleavage at a junction such as a reciprocal single-stranded crossover between two homologous DNA duplexes (Holliday junction).. Functionally, the RuvA-RuvB-RuvC complex processes Holliday junction (HJ) DNA during genetic recombination and DNA repair. Endonuclease that resolves HJ intermediates. Cleaves cruciform DNA by making single-stranded nicks across the HJ at symmetrical positions within the homologous arms, yielding a 5'-phosphate and a 3'-hydroxyl group; requires a central core of homology in the junction. The consensus cleavage sequence is 5'-(A/T)TT(C/G)-3'. Cleavage occurs on the 3'-side of the TT dinucleotide at the point of strand exchange. HJ branch migration catalyzed by RuvA-RuvB allows RuvC to scan DNA until it finds its consensus sequence, where it cleaves and resolves the cruciform DNA. The sequence is that of Crossover junction endodeoxyribonuclease RuvC from Janthinobacterium sp. (strain Marseille) (Minibacterium massiliensis).